A 78-amino-acid polypeptide reads, in one-letter code: Large ribosomal subunit protein bL28 (78 aa).

It belongs to the bacterial ribosomal protein bL28 family.

The polypeptide is Large ribosomal subunit protein bL28 (Prochlorococcus marinus (strain AS9601)).